A 283-amino-acid chain; its full sequence is Orotidine 5'-phosphate decarboxylase (283 aa).

Substrate-binding positions include aspartate 40, 62-64 (KTH), 93-102 (DRKFADIGNT), tyrosine 220, and arginine 239. Residue lysine 95 is the Proton donor of the active site.

Belongs to the OMP decarboxylase family.

It carries out the reaction orotidine 5'-phosphate + H(+) = UMP + CO2. The protein operates within pyrimidine metabolism; UMP biosynthesis via de novo pathway; UMP from orotate: step 2/2. This is Orotidine 5'-phosphate decarboxylase (PYR6) from Mycosarcoma maydis (Corn smut fungus).